The sequence spans 165 residues: Chorismate pyruvate-lyase (165 aa).

Met35, Arg77, Leu115, and Glu156 together coordinate substrate.

The protein belongs to the UbiC family. Monomer.

The protein localises to the cytoplasm. It carries out the reaction chorismate = 4-hydroxybenzoate + pyruvate. It participates in cofactor biosynthesis; ubiquinone biosynthesis. Functionally, removes the pyruvyl group from chorismate, with concomitant aromatization of the ring, to provide 4-hydroxybenzoate (4HB) for the ubiquinone pathway. This Escherichia coli O17:K52:H18 (strain UMN026 / ExPEC) protein is Chorismate pyruvate-lyase.